Reading from the N-terminus, the 376-residue chain is Erythronate-4-phosphate dehydrogenase (376 aa).

Serine 45 and threonine 67 together coordinate substrate. Aspartate 147 contacts NAD(+). Arginine 209 is a catalytic residue. Aspartate 233 serves as a coordination point for NAD(+). The active site involves glutamate 238. The Proton donor role is filled by histidine 255. NAD(+) is bound at residue glycine 258. Substrate is bound at residue tyrosine 259.

Belongs to the D-isomer specific 2-hydroxyacid dehydrogenase family. PdxB subfamily. Homodimer.

The protein localises to the cytoplasm. It catalyses the reaction 4-phospho-D-erythronate + NAD(+) = (R)-3-hydroxy-2-oxo-4-phosphooxybutanoate + NADH + H(+). Its pathway is cofactor biosynthesis; pyridoxine 5'-phosphate biosynthesis; pyridoxine 5'-phosphate from D-erythrose 4-phosphate: step 2/5. In terms of biological role, catalyzes the oxidation of erythronate-4-phosphate to 3-hydroxy-2-oxo-4-phosphonooxybutanoate. This is Erythronate-4-phosphate dehydrogenase from Shewanella baltica (strain OS155 / ATCC BAA-1091).